A 131-amino-acid polypeptide reads, in one-letter code: Guanyl-specific ribonuclease F1 (131 aa).

The first 25 residues, 1 to 25 (MLFFKSIASLAALVSLAVASPIESR), serve as a signal peptide directing secretion. Gln-26 carries the pyrrolidone carboxylic acid modification. Intrachain disulfides connect Cys-31–Cys-127 and Cys-49–Cys-108. His-65 is an active-site residue. Catalysis depends on Glu-83, which acts as the Proton acceptor. His-116 acts as the Proton donor in catalysis.

It belongs to the ribonuclease N1/T1 family.

It carries out the reaction [RNA] containing guanosine + H2O = an [RNA fragment]-3'-guanosine-3'-phosphate + a 5'-hydroxy-ribonucleotide-3'-[RNA fragment].. The protein is Guanyl-specific ribonuclease F1 of Fusarium fujikuroi (Bakanae and foot rot disease fungus).